A 344-amino-acid polypeptide reads, in one-letter code: Dihydroorotate dehydrogenase (quinone) (344 aa).

FMN-binding positions include Ala-65 to Lys-69 and Thr-89. Lys-69 lines the substrate pocket. Asn-114–Phe-118 provides a ligand contact to substrate. Asn-145 and Asn-178 together coordinate FMN. Residue Asn-178 participates in substrate binding. Catalysis depends on Ser-181, which acts as the Nucleophile. Asn-183 serves as a coordination point for substrate. Residues Lys-223 and Thr-251 each coordinate FMN. Asn-252–Thr-253 serves as a coordination point for substrate. FMN-binding positions include Gly-274, Gly-303, and Tyr-324–Thr-325.

It belongs to the dihydroorotate dehydrogenase family. Type 2 subfamily. Monomer. It depends on FMN as a cofactor.

The protein localises to the cell membrane. The enzyme catalyses (S)-dihydroorotate + a quinone = orotate + a quinol. It functions in the pathway pyrimidine metabolism; UMP biosynthesis via de novo pathway; orotate from (S)-dihydroorotate (quinone route): step 1/1. Functionally, catalyzes the conversion of dihydroorotate to orotate with quinone as electron acceptor. This Methylibium petroleiphilum (strain ATCC BAA-1232 / LMG 22953 / PM1) protein is Dihydroorotate dehydrogenase (quinone).